The primary structure comprises 280 residues: Tumor necrosis factor ligand superfamily member 6 (280 aa).

Residues 1-80 (MQQPLNYPYP…KTRRDHNTGL (80 aa)) lie on the Cytoplasmic side of the membrane. The tract at residues 20–71 (SSPWGPPGSVLPCPSSVPGRPGQRRPPPPPPPTLPPPPPPPPLPPLPLPPLK) is disordered. Over residues 43 to 69 (RRPPPPPPPTLPPPPPPPPLPPLPLPP) the composition is skewed to pro residues. A helical; Signal-anchor for type II membrane protein membrane pass occupies residues 81-101 (CLLVMFFMVLVALVGLGLGMF). Topologically, residues 102–280 (QLFHLQKELA…SKTFFGLYKL (179 aa)) are extracellular. Residues 144–280 (KVAHLTGKPN…SKTFFGLYKL (137 aa)) form the THD domain. Asn-183 carries N-linked (GlcNAc...) asparagine glycosylation. Cys-201 and Cys-232 are disulfide-bonded. N-linked (GlcNAc...) asparagine glycosylation is found at Asn-249 and Asn-259.

The protein belongs to the tumor necrosis factor family. Homotrimer. Interacts with ARHGAP9, BAIAP2L1, BTK, CACNB3, CACNB4, CRK, DLG2, DNMBP, DOCK4, EPS8L3, FGR, FYB1, FYN, HCK, ITK, ITSN2, KALRN, LYN, MACC1, MIA, MPP4, MYO15A, NCF1, NCK1, NCK2, NCKIPSD, OSTF1, PIK3R1, PSTPIP1, RIMBP3C, SAMSN1, SH3GL3, SH3PXD2B, SH3PXD2A, SH3RF2, SKAP2, SNX33, SNX9, SORBS3, SPTA1, SRC, SRGAP1, SRGAP2, SRGAP3, TEC, TJP3 and YES1. The soluble form derives from the membrane form by proteolytic processing. The membrane-bound form undergoes two successive intramembrane proteolytic cleavages. The first one is processed by ADAM10 producing an N-terminal fragment, which lacks the receptor-binding extracellular domain. This ADAM10-processed FasL (FasL APL) remnant form is still membrane anchored and further processed by SPPL2A that liberates the FasL intracellular domain (FasL ICD). FasL shedding by ADAM10 is a prerequisite for subsequent intramembrane cleavage by SPPL2A in T-cells. In terms of processing, phosphorylated by FGR on tyrosine residues; this is required for ubiquitination and subsequent internalization. Post-translationally, N-glycosylated. Glycosylation enhances apoptotic activity. Monoubiquitinated.

The protein resides in the cell membrane. The protein localises to the cytoplasmic vesicle lumen. Its subcellular location is the lysosome lumen. It localises to the secreted. It is found in the nucleus. Its function is as follows. Cytokine that binds to TNFRSF6/FAS, a receptor that transduces the apoptotic signal into cells. Involved in cytotoxic T-cell-mediated apoptosis, natural killer cell-mediated apoptosis and in T-cell development. Initiates fratricidal/suicidal activation-induced cell death (AICD) in antigen-activated T-cells contributing to the termination of immune responses. TNFRSF6/FAS-mediated apoptosis has also a role in the induction of peripheral tolerance. Binds to TNFRSF6B/DcR3, a decoy receptor that blocks apoptosis. In terms of biological role, induces FAS-mediated activation of NF-kappa-B, initiating non-apoptotic signaling pathways. Can induce apoptosis but does not appear to be essential for this process. Cytoplasmic form induces gene transcription inhibition. The chain is Tumor necrosis factor ligand superfamily member 6 (FASLG) from Felis catus (Cat).